Reading from the N-terminus, the 609-residue chain is Copper resistance protein A (609 aa).

Residues 1–32 constitute a signal peptide (tat-type signal); that stretch reads MESRTSRRTFVKGLAAAGVLGGLGLWRSPSWA. Residues histidine 100, histidine 102, histidine 142, and histidine 144 each coordinate Cu cation. Repeat copies occupy residues 367 to 374, 375 to 382, 408 to 415, 419 to 426, and 427 to 434. Residues 367 to 434 are 5 X 8 AA tandem repeats of D-H-X-X-M-X-G-M; sequence DDMGMGGMDH…GMDHGAMGGM (68 aa). Cu cation-binding residues include histidine 542, histidine 545, histidine 547, histidine 590, cysteine 591, histidine 592, histidine 596, and methionine 601.

This sequence belongs to the multicopper oxidase family. CopA subfamily. Post-translationally, predicted to be exported by the Tat system. The position of the signal peptide cleavage has been experimentally proven.

Its subcellular location is the periplasm. Its function is as follows. Mediates copper resistance by sequestration of copper in the periplasm along with the copper-binding protein CopC. May have oxidase activity. The protein is Copper resistance protein A (copA) of Pseudomonas syringae pv. tomato.